We begin with the raw amino-acid sequence, 116 residues long: Guanylin (116 aa).

A signal peptide spans 1 to 23 (MNACVLSVLCLLGALAVLVEGVT). A propeptide spanning residues 24-101 (VQDGDLSFPL…LQRLEAIAQD (78 aa)) is cleaved from the precursor. Disulfide bonds link Cys69–Cys83, Cys105–Cys113, and Cys108–Cys116.

This sequence belongs to the guanylin family. As to expression, localized in both crypts and villi in the small intestine and to superficial epithelial cells in the colon.

It is found in the secreted. In terms of biological role, endogenous activator of intestinal guanylate cyclase. It stimulates this enzyme through the same receptor binding region as the heat-stable enterotoxins. This is Guanylin (Guca2a) from Mus musculus (Mouse).